We begin with the raw amino-acid sequence, 361 residues long: Chorismate synthase (361 aa).

Residues R48 and R54 each coordinate NADP(+). Residues 125–127, 238–239, G278, 293–297, and R319 each bind FMN; these read RSS, NA, and KPTSS.

It belongs to the chorismate synthase family. As to quaternary structure, homotetramer. FMNH2 is required as a cofactor.

The enzyme catalyses 5-O-(1-carboxyvinyl)-3-phosphoshikimate = chorismate + phosphate. Its pathway is metabolic intermediate biosynthesis; chorismate biosynthesis; chorismate from D-erythrose 4-phosphate and phosphoenolpyruvate: step 7/7. Its function is as follows. Catalyzes the anti-1,4-elimination of the C-3 phosphate and the C-6 proR hydrogen from 5-enolpyruvylshikimate-3-phosphate (EPSP) to yield chorismate, which is the branch point compound that serves as the starting substrate for the three terminal pathways of aromatic amino acid biosynthesis. This reaction introduces a second double bond into the aromatic ring system. The polypeptide is Chorismate synthase (Klebsiella pneumoniae (strain 342)).